A 132-amino-acid polypeptide reads, in one-letter code: Small ribosomal subunit protein uS8 (132 aa).

The protein belongs to the universal ribosomal protein uS8 family. In terms of assembly, part of the 30S ribosomal subunit. Contacts proteins S5 and S12.

Functionally, one of the primary rRNA binding proteins, it binds directly to 16S rRNA central domain where it helps coordinate assembly of the platform of the 30S subunit. This is Small ribosomal subunit protein uS8 from Saccharopolyspora erythraea (strain ATCC 11635 / DSM 40517 / JCM 4748 / NBRC 13426 / NCIMB 8594 / NRRL 2338).